The sequence spans 72 residues: Phaiodotoxin-3 (72 aa).

Residues 1 to 72 (KFIRHKDESF…CFGALESKCA (72 aa)) form the LCN-type CS-alpha/beta domain. Intrachain disulfides connect Cys13/Cys38, Cys23/Cys50, Cys27/Cys52, and Cys63/Cys71.

This sequence belongs to the long (4 C-C) scorpion toxin superfamily. Sodium channel inhibitor family. Expressed by the venom gland.

The protein resides in the secreted. In terms of biological role, sodium channel (Nav) specific neurotoxin. This chain is Phaiodotoxin-3, found in Anuroctonus phaiodactylus (Mafia scorpion).